The sequence spans 479 residues: ATP synthase subunit beta (479 aa).

168–175 (GGAGVGKT) contributes to the ATP binding site.

This sequence belongs to the ATPase alpha/beta chains family. In terms of assembly, F-type ATPases have 2 components, CF(1) - the catalytic core - and CF(0) - the membrane proton channel. CF(1) has five subunits: alpha(3), beta(3), gamma(1), delta(1), epsilon(1). CF(0) has three main subunits: a(1), b(2) and c(9-12). The alpha and beta chains form an alternating ring which encloses part of the gamma chain. CF(1) is attached to CF(0) by a central stalk formed by the gamma and epsilon chains, while a peripheral stalk is formed by the delta and b chains.

The protein localises to the cell membrane. The enzyme catalyses ATP + H2O + 4 H(+)(in) = ADP + phosphate + 5 H(+)(out). Functionally, produces ATP from ADP in the presence of a proton gradient across the membrane. The catalytic sites are hosted primarily by the beta subunits. The polypeptide is ATP synthase subunit beta (Frankia alni (strain DSM 45986 / CECT 9034 / ACN14a)).